Reading from the N-terminus, the 483-residue chain is Phloretin 2'-O-glucosyltransferase (483 aa).

His-15 (proton acceptor) is an active-site residue. Residue His-15 participates in an anthocyanidin binding. The active-site Charge relay is the Asp-118. Thr-140, Ala-360, Gln-362, His-377, Trp-380, Asn-381, Ser-382, and Glu-385 together coordinate UDP-alpha-D-glucose. Ala-400 lines the an anthocyanidin pocket. UDP-alpha-D-glucose contacts are provided by Glu-401 and Gln-402.

It belongs to the UDP-glycosyltransferase family.

The catalysed reaction is phloretin + UDP-alpha-D-glucose = phlorizin + UDP + H(+). Functionally, glycosyltransferase that possesses phloretin 2'-O-glycosyltransferase activity. Converts phloretin to phlorizin (phloretin 2'-O-glucoside), a potent antioxidant. Is specific for phloretin and does not possess glycosyltransferase activity toward naringenin, naringenin chalcone, eriodictyol, eriodictyol chalcone, apigenin, luteolin, kaempferol, quercetin, isoliquiritigenin, butein, caffeic acid, 2-coumaric acid, 3-coumaric acid, 3-hydroxybenzoic acid, 3,4-dihydroxybenzoic acid and 3,4-dihydroxyhydrocinnamic acid. Can glycosylate phloretin in the presence of UDP-glucose, UDP-xylose and UDP-galactose. The chain is Phloretin 2'-O-glucosyltransferase from Pyrus communis (Pear).